Consider the following 179-residue polypeptide: Large ribosomal subunit protein uL6 (179 aa).

Belongs to the universal ribosomal protein uL6 family. Part of the 50S ribosomal subunit.

Functionally, this protein binds to the 23S rRNA, and is important in its secondary structure. It is located near the subunit interface in the base of the L7/L12 stalk, and near the tRNA binding site of the peptidyltransferase center. The sequence is that of Large ribosomal subunit protein uL6 from Leptospira interrogans serogroup Icterohaemorrhagiae serovar copenhageni (strain Fiocruz L1-130).